Reading from the N-terminus, the 194-residue chain is Protein GrpE (194 aa).

Residues 1–14 are compositionally biased toward polar residues; it reads MENTQENPTSQNPT. The segment at 1 to 50 is disordered; it reads MENTQENPTSQNPTPADETARQAAEAAAPQQEAAANAATDSPVNAEQSAL. Over residues 21–38 the composition is skewed to low complexity; sequence RQAAEAAAPQQEAAANAA.

The protein belongs to the GrpE family. Homodimer.

It localises to the cytoplasm. In terms of biological role, participates actively in the response to hyperosmotic and heat shock by preventing the aggregation of stress-denatured proteins, in association with DnaK and GrpE. It is the nucleotide exchange factor for DnaK and may function as a thermosensor. Unfolded proteins bind initially to DnaJ; upon interaction with the DnaJ-bound protein, DnaK hydrolyzes its bound ATP, resulting in the formation of a stable complex. GrpE releases ADP from DnaK; ATP binding to DnaK triggers the release of the substrate protein, thus completing the reaction cycle. Several rounds of ATP-dependent interactions between DnaJ, DnaK and GrpE are required for fully efficient folding. The polypeptide is Protein GrpE (Paraburkholderia phytofirmans (strain DSM 17436 / LMG 22146 / PsJN) (Burkholderia phytofirmans)).